A 341-amino-acid polypeptide reads, in one-letter code: GTP-binding protein GTR2 (341 aa).

GTP contacts are provided by Ser23, Ser24, Ser43, His124, and Asp127.

The protein belongs to the GTR/RAG GTP-binding protein family. In terms of assembly, heterodimer; with GTR1. Component of the GSE complex composed of GTR1, GTR2, SLM4, MEH1 and LTV1. Component of the EGO complex, at least composed of GTR2, SLM4 and MEH1. Interacts with GTR1; the interaction is direct.

It localises to the vacuole membrane. The enzyme catalyses GTP + H2O = GDP + phosphate + H(+). Functionally, GTPase involved in activation of the TORC1 signaling pathway, which promotes growth and represses autophagy in nutrient-rich conditions. Also required for TORC1 inactivation during nitrogen starvation. Required for intracellular sorting of GAP1 out of the endosome. Involved in the regulation of microautophagy. The sequence is that of GTP-binding protein GTR2 from Saccharomyces cerevisiae (strain ATCC 204508 / S288c) (Baker's yeast).